A 166-amino-acid polypeptide reads, in one-letter code: Peptide methionine sulfoxide reductase MsrA (166 aa).

Cys-11 is a catalytic residue.

The protein belongs to the MsrA Met sulfoxide reductase family.

It catalyses the reaction L-methionyl-[protein] + [thioredoxin]-disulfide + H2O = L-methionyl-(S)-S-oxide-[protein] + [thioredoxin]-dithiol. It carries out the reaction [thioredoxin]-disulfide + L-methionine + H2O = L-methionine (S)-S-oxide + [thioredoxin]-dithiol. Has an important function as a repair enzyme for proteins that have been inactivated by oxidation. Catalyzes the reversible oxidation-reduction of methionine sulfoxide in proteins to methionine. This is Peptide methionine sulfoxide reductase MsrA from Lachnoclostridium phytofermentans (strain ATCC 700394 / DSM 18823 / ISDg) (Clostridium phytofermentans).